Consider the following 1047-residue polypeptide: Probable phospholipid-transporting ATPase IIA (1047 aa).

Threonine 2 carries the post-translational modification N-acetylthreonine. Over 2–69 the chain is Cytoplasmic; the sequence is TDNIPLQPVR…NQKYNFFTFL (68 aa). A helical membrane pass occupies residues 70–91; sequence PGVLFNQFKYFFNLYFLLLACS. The Extracellular portion of the chain corresponds to 92–96; that stretch reads QFVPE. Residues 97 to 119 traverse the membrane as a helical segment; that stretch reads MRLGALYTYWVPLGFVLAVTVIR. Topologically, residues 120–303 are cytoplasmic; the sequence is EAVEEIRCYV…GLFDLEVNCL (184 aa). Residues 304 to 325 form a helical membrane-spanning segment; it reads TKILFGALVVVSLVMVALQHFA. The Extracellular segment spans residues 326 to 332; sequence GRWYLQI. Residues 333–354 form a helical membrane-spanning segment; sequence IRFLLLFSNIIPISLRVNLDMG. Residues 355–841 lie on the Cytoplasmic side of the membrane; it reads KIVYSWVIRR…GRNSYKRSAA (487 aa). Aspartate 391 functions as the 4-aspartylphosphate intermediate in the catalytic mechanism. Aspartate 391, lysine 392, threonine 393, glutamate 502, phenylalanine 544, lysine 549, lysine 568, arginine 597, threonine 677, glycine 678, aspartate 679, arginine 759, and lysine 765 together coordinate ATP. Aspartate 391 lines the Mg(2+) pocket. Threonine 393 contacts Mg(2+). Residue aspartate 785 coordinates Mg(2+). 2 residues coordinate ATP: asparagine 788 and aspartate 789. Aspartate 789 contributes to the Mg(2+) binding site. A helical transmembrane segment spans residues 842 to 862; the sequence is LSQFVIHRSLCISTMQAVFSS. The Extracellular portion of the chain corresponds to 863-874; the sequence is VFYFASVPLYQG. The chain crosses the membrane as a helical span at residues 875-893; the sequence is FLIIGYSTIYTMFPVFSLV. At 894 to 923 the chain is on the cytoplasmic side; it reads LDKDVKSEVAMLYPELYKDLLKGRPLSYKT. Residues 924–942 traverse the membrane as a helical segment; that stretch reads FLIWVLISIYQGSTIMYGA. Residues 943-949 lie on the Extracellular side of the membrane; it reads LLLFESE. The chain crosses the membrane as a helical span at residues 950 to 972; it reads FVHIVAISFTSLILTELLMVALT. The Cytoplasmic segment spans residues 973-978; sequence IQTWHW. Residues 979-999 traverse the membrane as a helical segment; that stretch reads LMTVAELLSLACYIASLVFLH. The Extracellular portion of the chain corresponds to 1000 to 1006; sequence EFIDVYF. The helical transmembrane segment at 1007 to 1030 threads the bilayer; the sequence is IATLSFLWKVSVITLVSCLPLYVL. Residues 1031-1047 are Cytoplasmic-facing; it reads KYLRRRFSPPSYSKLTS.

The protein belongs to the cation transport ATPase (P-type) (TC 3.A.3) family. Type IV subfamily. In terms of assembly, heterotrimer with MON2 and DOP1B; this complex regulates SNX3-retromer mediated endosomal sorting of WLS. Interacts with RAB5A and RAB11A. It depends on Mg(2+) as a cofactor.

It localises to the early endosome membrane. Its subcellular location is the recycling endosome membrane. The protein resides in the late endosome membrane. It is found in the golgi apparatus. The protein localises to the trans-Golgi network membrane. It localises to the cell membrane. The enzyme catalyses ATP + H2O + phospholipidSide 1 = ADP + phosphate + phospholipidSide 2.. Functionally, plays a role in regulating membrane trafficking of cargo proteins, namely endosome to plasma membrane recycling, probably acting through RAB5 and RAB11 activation. Also involved in endosome to trans-Golgi network retrograde transport. In complex with MON2 and DOP1B, regulates SNX3 retromer-mediated endosomal sorting of WLS, a transporter of Wnt morphogens in developing tissues. Participates in the formation of endosomal carriers that direct WLS trafficking back to Golgi, away from lysosomal degradation. Appears to be implicated in intercellular communication by negatively regulating the release of exosomes. The flippase activity towards membrane lipids and its role in membrane asymmetry remains to be proved. Required for the maintenance of neurite morphology and synaptic transmission. In Homo sapiens (Human), this protein is Probable phospholipid-transporting ATPase IIA.